The following is a 204-amino-acid chain: LexA repressor (204 aa).

Positions 28–48 (RAEIAQELGFKSPNAAEEHLK) form a DNA-binding region, H-T-H motif. Residues serine 125 and lysine 162 each act as for autocatalytic cleavage activity in the active site.

Belongs to the peptidase S24 family. As to quaternary structure, homodimer.

The catalysed reaction is Hydrolysis of Ala-|-Gly bond in repressor LexA.. Functionally, represses a number of genes involved in the response to DNA damage (SOS response), including recA and lexA. In the presence of single-stranded DNA, RecA interacts with LexA causing an autocatalytic cleavage which disrupts the DNA-binding part of LexA, leading to derepression of the SOS regulon and eventually DNA repair. This is LexA repressor from Pseudomonas aeruginosa (strain LESB58).